Reading from the N-terminus, the 431-residue chain is MAVDVLLGLQWGDEGKGKVVDVLAPKYDYVARFQGGPNAGHTLIFDGHKVVLHQIPSGVFRSNITNLIGNGLVLDVIALFEKEIDKLEAFKLNLNKNLFISKKAALILPSHVELDKAYEAAKGAGKIGSTLRGIGPTYTDKVSRHGLRVGDILSPDFMDKYNKLVDQHKQILDFHKHDYSEMKEREDLFFKYIDRLRKMNLVDSEYFINDAIQSKKTILAEGAQGSLLDIDFGSYPFVTSSSTMVAGACTGLGIAPKHIGNVFGIFKAYCTRVGSGPFPTELHDAVGEEIRKQGNEFGSTTGRPRRCGWLDLPALKYACMINGVSHLLMMKADVLNAFEELQVCTHYKLGNGDIVDTLPYDMCTNDLTPVYKTLKGWNQDLSNCETFDSLPQALLDYSAFIEAELGLPITLISIGPDRKETLIKDFSFITA.

GTP is bound by residues 12-18 (GDEGKGK) and 40-42 (GHT). Asp-13 (proton acceptor) is an active-site residue. Residues Asp-13 and Gly-40 each coordinate Mg(2+). Residues 13 to 16 (DEGK), 38 to 41 (NAGH), Thr-130, Arg-144, Gln-224, Thr-239, and Arg-303 contribute to the IMP site. His-41 acts as the Proton donor in catalysis. 299–305 (STTGRPR) is a substrate binding site. GTP is bound by residues Arg-305, 331–333 (KAD), and 413–415 (SIG).

The protein belongs to the adenylosuccinate synthetase family. Homodimer. It depends on Mg(2+) as a cofactor.

Its subcellular location is the cytoplasm. It carries out the reaction IMP + L-aspartate + GTP = N(6)-(1,2-dicarboxyethyl)-AMP + GDP + phosphate + 2 H(+). Its pathway is purine metabolism; AMP biosynthesis via de novo pathway; AMP from IMP: step 1/2. In terms of biological role, plays an important role in the de novo pathway of purine nucleotide biosynthesis. Catalyzes the first committed step in the biosynthesis of AMP from IMP. This Cytophaga hutchinsonii (strain ATCC 33406 / DSM 1761 / CIP 103989 / NBRC 15051 / NCIMB 9469 / D465) protein is Adenylosuccinate synthetase.